Consider the following 372-residue polypeptide: N-methyl-L-tryptophan oxidase (372 aa).

D4–H34 is a binding site for FAD. C308 carries the S-8alpha-FAD cysteine modification.

The protein belongs to the MSOX/MTOX family. MTOX subfamily. Monomer. Requires FAD as cofactor.

The catalysed reaction is N(alpha)-methyl-L-tryptophan + O2 + H2O = L-tryptophan + formaldehyde + H2O2. Functionally, catalyzes the oxidative demethylation of N-methyl-L-tryptophan. This Escherichia coli O139:H28 (strain E24377A / ETEC) protein is N-methyl-L-tryptophan oxidase.